We begin with the raw amino-acid sequence, 408 residues long: Energy-coupling factor transporter ATP-binding protein EcfA1 (408 aa).

The region spanning 140-374 (IEINHLSFKY…KDFLRNIQLD (235 aa)) is the ABC transporter domain. 174–181 (GHNGSGKS) provides a ligand contact to ATP.

This sequence belongs to the ABC transporter superfamily. Energy-coupling factor EcfA family. As to quaternary structure, forms a stable energy-coupling factor (ECF) transporter complex composed of 2 membrane-embedded substrate-binding proteins (S component), 2 ATP-binding proteins (A component) and 2 transmembrane proteins (T component).

The protein localises to the cell membrane. ATP-binding (A) component of a common energy-coupling factor (ECF) ABC-transporter complex. Unlike classic ABC transporters this ECF transporter provides the energy necessary to transport a number of different substrates. The polypeptide is Energy-coupling factor transporter ATP-binding protein EcfA1 (Mycoplasma mycoides subsp. mycoides SC (strain CCUG 32753 / NCTC 10114 / PG1)).